The primary structure comprises 224 residues: uncharacterized protein (224 aa).

Residues 1-16 (MKILYSFLLLPFFSCA) form the signal peptide.

This is an uncharacterized protein from Escherichia coli.